We begin with the raw amino-acid sequence, 638 residues long: Meiosis initiator protein (638 aa).

5 disordered regions span residues 1–21, 60–79, 138–249, 404–433, and 447–537; these read MFGS…SLGP, NQRN…KNHT, LAGL…KGGQ, PSAY…SLHR, and GNSK…PCPP. The span at 7–20 shows a compositional bias: polar residues; the sequence is YLGSSEQPRANSLG. Residues 62 to 75 are basic motif; degenerate; the sequence is RNQNKLLSPNKKQR. The bHLH domain occupies 62 to 116; it reads RNQNKLLSPNKKQRKNHTSKLQELALLLPIALKTGTKKLTKKEILVHVLQYIQYL. The interval 76–116 is helix-loop-helix motif; it reads KNHTSKLQELALLLPIALKTGTKKLTKKEILVHVLQYIQYL. The segment covering 157–167 has biased composition (low complexity); that stretch reads TPSSSPSSQKS. Polar residues predominate over residues 182–191; it reads TQASESQTRT. Residues 412-430 are compositionally biased toward basic and acidic residues; that stretch reads PQEKDTASKAPKDPPESHS. The segment covering 453 to 465 has biased composition (low complexity); the sequence is SSSSSSSSSSSSS. Residues 528-537 show a composition bias toward basic residues; that stretch reads KEKKKGPCPP. The segment at residues 540-608 is a DNA-binding region (HMG box); it reads KKKCVNGFIM…QHNRIVKQDG (69 aa).

In terms of assembly, interacts with STRA8.

It localises to the nucleus. In terms of biological role, gatekeeper of meiotic initiation in both male and female germ cells. In complex with STRA8, directly activates the transcription of a subset of critical meiotic genes playing a central role in cell-cycle switching from mitosis to meiosis. Temporal expression of MEIOSIN is required for meiotic entry decision. The protein is Meiosis initiator protein of Homo sapiens (Human).